Consider the following 98-residue polypeptide: Prostate and testis expressed protein 3 (98 aa).

The first 20 residues, 1–20 (MNKHFLLLFSLFYFIVEATS), serve as a signal peptide directing secretion. The UPAR/Ly6 domain occupies 21–97 (LKCVTCHLRT…CCNSDFCNFR (77 aa)). 4 cysteine pairs are disulfide-bonded: Cys-23/Cys-50, Cys-26/Cys-35, Cys-42/Cys-68, and Cys-72/Cys-88.

This sequence belongs to the PATE family.

It is found in the secreted. The chain is Prostate and testis expressed protein 3 (Pate3) from Mus musculus (Mouse).